The chain runs to 223 residues: Large ribosomal subunit protein uL3 (223 aa).

Residues 137–157 (GRASHGNSRSHNVPGSIGMAQ) form a disordered region. Q157 carries the N5-methylglutamine modification.

This sequence belongs to the universal ribosomal protein uL3 family. As to quaternary structure, part of the 50S ribosomal subunit. Forms a cluster with proteins L14 and L19. Post-translationally, methylated by PrmB.

In terms of biological role, one of the primary rRNA binding proteins, it binds directly near the 3'-end of the 23S rRNA, where it nucleates assembly of the 50S subunit. The polypeptide is Large ribosomal subunit protein uL3 (Burkholderia pseudomallei (strain 1106a)).